A 735-amino-acid chain; its full sequence is MAAGGAVAAAPECRLLPYALHKWSSFSSTYLPENILVDKPNDQSSRWSSESNYPPQYLILKLERPAIVQNITFGKYEKTHVCNLKKFKVFGGMNEENMTELLSSGLKNDYNKETFTLKHKIDEQMFPCRFIKIVPLLSWGPSFNFSIWYVELSGIDDPDIVQPCLNWYSKYREQEAIRLCLKHFRQHNYTEAFESLQKKTKIALEHPMLTDIHDKLVLKGDFDACEELIEKAVNDGLFNQYISQQEYKPRWSQIIPKSTKGDGEDNRPGMRGGHQMVIDVQTETVYLFGGWDGTQDLADFWAYSVKENQWTCISRDTEKENGPSARSCHKMCIDIQRRQIYTLGRYLDSSVRNSKSLKSDFYRYDIDTNTWMLLSEDTAADGGPKLVFDHQMCMDSEKHMIYTFGGRILTCNGSVDDSRASEPQFSGLFAFNCQCQTWKLLREDSCNAGPEDIQSRIGHCMLFHSKNRCLYVFGGQRSKTYLNDFFSYDVDSDHVDIISDGTKKDSGMVPMTGFTQRATIDPELNEIHVLSGLSKDKEKREENVRNSFWIYDIVRNSWSCVYKNDQAAKDNPTKSLQEEEPCPRFAHQLVYDELHKVHYLFGGNPGKSCSPKMRLDDFWSLKLCRPSKDYLLRHCKYLIRKHRFEEKAQMDPLSALKYLQNDLYITVDHSDPEETKEFQLLASALFKSGSDFTALGFSDVDHTYAQRTQLFDTLVNFFPDSMTPPKGNLVDLITL.

Ala2 carries the post-translational modification N-acetylalanine. The LisH domain maps to 172 to 204 (REQEAIRLCLKHFRQHNYTEAFESLQKKTKIAL). The CTLH domain occupies 206 to 258 (HPMLTDIHDKLVLKGDFDACEELIEKAVNDGLFNQYISQQEYKPRWSQIIPKS). 6 Kelch repeats span residues 284–330 (TVYL…SCHK), 339–391 (QIYT…FDHQ), 408–458 (ILTC…SRIG), 469–515 (CLYV…TGFT), 526–578 (EIHV…SLQE), and 597–651 (VHYL…AQMD).

In terms of assembly, homodimer; may form higher oligomers. Identified in the CTLH complex that contains GID4, RANBP9 and/or RANBP10, MKLN1, MAEA, RMND5A (or alternatively its paralog RMND5B), GID8, ARMC8, WDR26 and YPEL5. Within this complex, MAEA, RMND5A (or alternatively its paralog RMND5B), GID8, WDR26, and RANBP9 and/or RANBP10 form the catalytic core, while GID4, MKLN1, ARMC8 and YPEL5 have ancillary roles. Interacts with RANBP9. Part of a complex consisting of RANBP9, MKLN1 and GID8. Interacts with GABRA1. Interacts with the C-terminal tail of PTGER3.

Its subcellular location is the cytoplasm. It is found in the cytosol. It localises to the nucleus. The protein resides in the nucleoplasm. The protein localises to the cell projection. Its subcellular location is the ruffle. It is found in the cell cortex. It localises to the synapse. The protein resides in the postsynapse. Its function is as follows. Component of the CTLH E3 ubiquitin-protein ligase complex that selectively accepts ubiquitin from UBE2H and mediates ubiquitination and subsequent proteasomal degradation of the transcription factor HBP1. Required for internalization of the GABA receptor GABRA1 from the cell membrane via endosomes and subsequent GABRA1 degradation. Acts as a mediator of cell spreading and cytoskeletal responses to the extracellular matrix component THBS1. This chain is Muskelin (MKLN1), found in Pongo abelii (Sumatran orangutan).